The chain runs to 290 residues: Protein EURL homolog (290 aa).

A disordered region spans residues serine 185–glutamine 206. Residues alanine 228–leucine 251 adopt a coiled-coil conformation.

This sequence belongs to the EURL family. As to quaternary structure, interacts with CCDC85B. In terms of tissue distribution, expressed in brain (at protein level). Expressed in neural progenitor cells and postmitotic neurons of the embryonic cerebral cortex.

Plays a role in cortical progenitor cell proliferation and differentiation. Promotes dendritic spine development of post-migratory cortical projection neurons by modulating the beta-catenin signaling pathway. This chain is Protein EURL homolog, found in Mus musculus (Mouse).